The chain runs to 396 residues: NADH-quinone oxidoreductase subunit D (396 aa).

The protein belongs to the complex I 49 kDa subunit family. In terms of assembly, NDH-1 is composed of 14 different subunits. Subunits NuoB, C, D, E, F, and G constitute the peripheral sector of the complex.

The protein localises to the cell inner membrane. The catalysed reaction is a quinone + NADH + 5 H(+)(in) = a quinol + NAD(+) + 4 H(+)(out). Its function is as follows. NDH-1 shuttles electrons from NADH, via FMN and iron-sulfur (Fe-S) centers, to quinones in the respiratory chain. The immediate electron acceptor for the enzyme in this species is believed to be ubiquinone. Couples the redox reaction to proton translocation (for every two electrons transferred, four hydrogen ions are translocated across the cytoplasmic membrane), and thus conserves the redox energy in a proton gradient. The polypeptide is NADH-quinone oxidoreductase subunit D (Methylobacterium sp. (strain 4-46)).